The following is a 281-amino-acid chain: Proteasome subunit beta (281 aa).

A propeptide spans 1 to 53 (removed in mature form; by autocatalysis); that stretch reads MEANTRSTGRLPAAFLTPGSSSFMDFLSDQSPEMLPGNRSLPPLQGAVEAPHG. The active-site Nucleophile is the Thr-54.

The protein belongs to the peptidase T1B family. In terms of assembly, the 20S proteasome core is composed of 14 alpha and 14 beta subunits that assemble into four stacked heptameric rings, resulting in a barrel-shaped structure. The two inner rings, each composed of seven catalytic beta subunits, are sandwiched by two outer rings, each composed of seven alpha subunits. The catalytic chamber with the active sites is on the inside of the barrel. Has a gated structure, the ends of the cylinder being occluded by the N-termini of the alpha-subunits. Is capped by the proteasome-associated ATPase, ARC.

Its subcellular location is the cytoplasm. The enzyme catalyses Cleavage of peptide bonds with very broad specificity.. It participates in protein degradation; proteasomal Pup-dependent pathway. With respect to regulation, the formation of the proteasomal ATPase ARC-20S proteasome complex, likely via the docking of the C-termini of ARC into the intersubunit pockets in the alpha-rings, may trigger opening of the gate for substrate entry. Interconversion between the open-gate and close-gate conformations leads to a dynamic regulation of the 20S proteasome proteolysis activity. Its function is as follows. Component of the proteasome core, a large protease complex with broad specificity involved in protein degradation. This is Proteasome subunit beta from Streptomyces griseus subsp. griseus (strain JCM 4626 / CBS 651.72 / NBRC 13350 / KCC S-0626 / ISP 5235).